The chain runs to 457 residues: Multidrug resistance protein MdtK (457 aa).

12 helical membrane-spanning segments follow: residues 11 to 31 (LLAL…MGFV), 53 to 73 (IWLP…PVVA), 93 to 113 (WLAG…GYII), 127 to 147 (AVGY…FQVA), 160 to 180 (GMVM…IFIY), 191 to 211 (VGCG…MLWW), 243 to 263 (LPIA…ALLV), 276 to 296 (IALN…AAVT), 316 to 336 (RTGV…TVLM), 350 to 370 (VVLL…SDSI), 387 to 407 (IFFI…YLLA), and 418 to 438 (PAGF…MMML).

Belongs to the multi antimicrobial extrusion (MATE) (TC 2.A.66.1) family. MdtK subfamily.

It is found in the cell inner membrane. Functionally, multidrug efflux pump that functions probably as a Na(+)/drug antiporter. The polypeptide is Multidrug resistance protein MdtK (Klebsiella pneumoniae (strain 342)).